Consider the following 165-residue polypeptide: Transcriptional repressor NrdR (165 aa).

Residues 3 to 34 (CPFCRHPDSRVVDSREADEGQAIRRRRSCPEC) fold into a zinc finger. The region spanning 46 to 136 (LSVVKRSGVT…VYKSFSSAAD (91 aa)) is the ATP-cone domain.

The protein belongs to the NrdR family. The cofactor is Zn(2+).

Functionally, negatively regulates transcription of bacterial ribonucleotide reductase nrd genes and operons by binding to NrdR-boxes. This chain is Transcriptional repressor NrdR, found in Rhodococcus erythropolis (strain PR4 / NBRC 100887).